The chain runs to 186 residues: uncharacterized protein (186 aa).

3 disordered regions span residues 17 to 47, 77 to 105, and 121 to 164; these read LSGE…EETF, EDKL…AAEA, and QQAA…PVAG. Over residues 90–105 the composition is skewed to low complexity; it reads PLAARPPSQAAAAAEA. The segment covering 136-149 has biased composition (acidic residues); the sequence is PEPDPEPADEAAEE.

This is an uncharacterized protein from Homo sapiens (Human).